Here is a 990-residue protein sequence, read N- to C-terminus: Membrane alanyl aminopeptidase (990 aa).

The first 15 residues, 1-15 (FTIFLGVALLQGVLT), serve as a signal peptide directing secretion. A propeptide spans 16-35 (LSPIPVPEEEWAEFSRMLRD) (activation peptide). The N-linked (GlcNAc...) asparagine glycan is linked to asparagine 295. 321 to 325 (GAMEN) serves as a coordination point for substrate. Histidine 357 is a binding site for Zn(2+). Glutamate 358 (proton acceptor) is an active-site residue. Positions 361 and 380 each coordinate Zn(2+). N-linked (GlcNAc...) asparagine glycosylation is found at asparagine 609, asparagine 623, and asparagine 752. Residue glycine 968 is the site of GPI-anchor amidated glycine attachment. The propeptide at 969–990 (SGNIAALSVVSLLVTLAINMVA) is removed in mature form.

The protein belongs to the peptidase M1 family. Zn(2+) is required as a cofactor. In terms of tissue distribution, midgut brush-border membrane.

It localises to the cell membrane. Functionally, binds to the B.thuringiensis toxin, CryIA(C). The protein is Membrane alanyl aminopeptidase of Manduca sexta (Tobacco hawkmoth).